The chain runs to 228 residues: Ribosomal RNA large subunit methyltransferase E (228 aa).

5 residues coordinate S-adenosyl-L-methionine: Gly76, Trp78, Asp99, Asp115, and Asp139. Lys179 (proton acceptor) is an active-site residue.

Belongs to the class I-like SAM-binding methyltransferase superfamily. RNA methyltransferase RlmE family.

It is found in the cytoplasm. It catalyses the reaction uridine(2552) in 23S rRNA + S-adenosyl-L-methionine = 2'-O-methyluridine(2552) in 23S rRNA + S-adenosyl-L-homocysteine + H(+). Functionally, specifically methylates the uridine in position 2552 of 23S rRNA at the 2'-O position of the ribose in the fully assembled 50S ribosomal subunit. The protein is Ribosomal RNA large subunit methyltransferase E of Bradyrhizobium diazoefficiens (strain JCM 10833 / BCRC 13528 / IAM 13628 / NBRC 14792 / USDA 110).